A 169-amino-acid polypeptide reads, in one-letter code: MFSSTFRRLAIRPLNRVTMVGAMHDIQVGFLDRCSVFQFTLTCTVLDFQKVAEPQPKSPGSLPSSTRTAPNPNGEEVEKHINKEQYTVRCLGSEAYTEALKNYLDDGCIVRVIGRLKTTEVVDAGKKQPFPCIIVEQGRWSTVSLVHSLRKQRRDWQLQNILTSVATLE.

The transit peptide at methionine 1–leucine 91 directs the protein to the mitochondrion. Residues proline 54–glutamate 76 form a disordered region. Residues serine 61–asparagine 71 show a composition bias toward polar residues.

Its subcellular location is the mitochondrion. This is an uncharacterized protein from Trypanosoma brucei brucei (strain 927/4 GUTat10.1).